The primary structure comprises 460 residues: Serine--tRNA ligase (460 aa).

Residue 255–257 coordinates L-serine; sequence TAE. ATP contacts are provided by residues 286–288 and Val302; that span reads RKE. An L-serine-binding site is contributed by Glu309. Position 373–376 (373–376) interacts with ATP; it reads EMVS. Thr409 contributes to the L-serine binding site.

Belongs to the class-II aminoacyl-tRNA synthetase family. Type-1 seryl-tRNA synthetase subfamily. Homodimer. The tRNA molecule binds across the dimer.

The protein localises to the cytoplasm. The catalysed reaction is tRNA(Ser) + L-serine + ATP = L-seryl-tRNA(Ser) + AMP + diphosphate + H(+). It carries out the reaction tRNA(Sec) + L-serine + ATP = L-seryl-tRNA(Sec) + AMP + diphosphate + H(+). It participates in aminoacyl-tRNA biosynthesis; selenocysteinyl-tRNA(Sec) biosynthesis; L-seryl-tRNA(Sec) from L-serine and tRNA(Sec): step 1/1. In terms of biological role, catalyzes the attachment of serine to tRNA(Ser). Is also able to aminoacylate tRNA(Sec) with serine, to form the misacylated tRNA L-seryl-tRNA(Sec), which will be further converted into selenocysteinyl-tRNA(Sec). The sequence is that of Serine--tRNA ligase from Aeropyrum pernix (strain ATCC 700893 / DSM 11879 / JCM 9820 / NBRC 100138 / K1).